The sequence spans 45 residues: Large ribosomal subunit protein bL36 (45 aa).

A disordered region spans residues 1–45; it reads MKVSSSIKADPSKGDKLVRRKGRLYVINKKDPNRKQRQAGPARKK.

This sequence belongs to the bacterial ribosomal protein bL36 family.

The protein is Large ribosomal subunit protein bL36 of Chlamydia caviae (strain ATCC VR-813 / DSM 19441 / 03DC25 / GPIC) (Chlamydophila caviae).